Here is a 37-residue protein sequence, read N- to C-terminus: ADDKNPLEECFRETDYEEFLEIARNGLKATSNPKRVV.

The protein belongs to the flavin monoamine oxidase family. FIG1 subfamily. In terms of assembly, homodimer; non-covalently linked. The cofactor is FAD. N-Glycosylated. In terms of tissue distribution, expressed by the venom gland.

The protein resides in the secreted. It catalyses the reaction an L-alpha-amino acid + O2 + H2O = a 2-oxocarboxylate + H2O2 + NH4(+). The catalysed reaction is L-leucine + O2 + H2O = 4-methyl-2-oxopentanoate + H2O2 + NH4(+). It carries out the reaction L-phenylalanine + O2 + H2O = 3-phenylpyruvate + H2O2 + NH4(+). The enzyme catalyses L-tryptophan + O2 + H2O = indole-3-pyruvate + H2O2 + NH4(+). It catalyses the reaction L-methionine + O2 + H2O = 4-methylsulfanyl-2-oxobutanoate + H2O2 + NH4(+). The catalysed reaction is L-isoleucine + O2 + H2O = (S)-3-methyl-2-oxopentanoate + H2O2 + NH4(+). It carries out the reaction L-arginine + O2 + H2O = 5-guanidino-2-oxopentanoate + H2O2 + NH4(+). The enzyme catalyses L-histidine + O2 + H2O = 3-(imidazol-5-yl)pyruvate + H2O2 + NH4(+). It catalyses the reaction L-valine + O2 + H2O = 3-methyl-2-oxobutanoate + H2O2 + NH4(+). Its function is as follows. Catalyzes an oxidative deamination of predominantly hydrophobic and aromatic L-amino acids, thus producing hydrogen peroxide that may contribute to the diverse toxic effects of this enzyme. Is highly active on L-Leu, L-Met, moderately active on L-Arg, L-Trp, L-Phe, L-Val, L-His, and L-Ile, and is weakly or not active on L-Cys, L-Lys, L-Ala, L-Thr, L-Asp, L-Ser, and L-Pro. Exhibits diverse biological activities, such as hemorrhage, edema, apoptosis of vascular endothelial cells or tumor cell lines, as well as regulation of platelet aggregation. Effects of snake L-amino oxidases on platelets are controversial, since they either induce aggregation or inhibit agonist-induced aggregation. These different effects are probably due to different experimental conditions. This protein induce hemolysis and has antibacterial and antiparasitic activities (against the Gram-positive S.aureus). Tested in vivo, this protein significantly inhibits Ehrlich ascite tumors growth and induces an influx of polymorphonuclear cells, as well as spontaneous liberation of hydrogen peroxide from peritoneal macrophages. The sequence is that of L-amino-acid oxidase from Bothrops jararaca (Jararaca).